The chain runs to 247 residues: 14-3-3 protein gamma (247 aa).

Met-1 carries the post-translational modification N-acetylmethionine; in 14-3-3 protein gamma; alternate; partial. Val-2 is subject to N-acetylvaline; in 14-3-3 protein gamma, N-terminally processed; partial. Val-2 is subject to N-acetylvaline; partial. The required for interaction with SPATA18/MIEAP (isoform 2) but dispensable for binding to SPATA18/MIEAP (isoform 1) stretch occupies residues 2–166 (VDREQLVQKA…AHEISKEHMQ (165 aa)). The interaction with SPATA18/MIEAP stretch occupies residues 2–247 (VDREQLVQKA…QDDDGGEGNN (246 aa)). Ser-71 is modified (phosphoserine). Tyr-133 bears the Phosphotyrosine mark. Thr-145 carries the phosphothreonine modification. The residue at position 215 (Ser-215) is a Phosphoserine. Thr-234 carries the post-translational modification Phosphothreonine. Residue Ser-235 is modified to Phosphoserine.

It belongs to the 14-3-3 family. In terms of assembly, homodimer. Part of a complex that contains DSG3, PKP1, YAP1 and YWHAG; the complex is required for localization of DSG3 and YAP1 to the cell membrane in keratinocytes. Interacts with SAMSN1. Interacts with RAF1, SSH1 and CRTC2/TORC2. Interacts with ABL1 (phosphorylated form); the interaction retains it in the cytoplasm. Interacts with GAB2. Interacts with MDM4 (phosphorylated); negatively regulates MDM4 activity toward TP53. Interacts with PKA-phosphorylated AANAT and SIRT2. Interacts with the 'Thr-369' phosphorylated form of DAPK2. Interacts with PI4KB, TBC1D22A and TBC1D22B. Interacts with SLITRK1. Interacts with LRRK2; this interaction is dependent on LRRK2 phosphorylation. Interacts with MARK2 and MARK3. Interacts with MEFV. Interacts with ENDOG, TSC2 and PIK3C3; interaction with ENDOG weakens its interaction with TSC2 and PIK3C3. Interacts with (phosphorylated) WDR24. Interacts with BEST1; this interaction promotes L-glutamate channel activity leading to the positive regulation of NMDA glutamate receptor activity through the L-glutamate secretion. Interacts with PKP1 (when phosphorylated); the interaction results in translocation of PKP1 to the cytoplasm and loss of intercellular adhesion in keratinocytes. Interacts with SPATA18/MIEAP (isoforms 1 and 2); a protein that also plays a role in MALM. In terms of processing, phosphorylated by various PKC isozymes. Highly expressed in brain, skeletal muscle, and heart.

It is found in the cytoplasm. Its subcellular location is the cytosol. It localises to the mitochondrion matrix. In terms of biological role, adapter protein implicated in the regulation of a large spectrum of both general and specialized signaling pathways. Binds to a large number of partners, usually by recognition of a phosphoserine or phosphothreonine motif. Binding generally results in the modulation of the activity of the binding partner. Promotes inactivation of WDR24 component of the GATOR2 complex by binding to phosphorylated WDR24. Participates in the positive regulation of NMDA glutamate receptor activity by promoting the L-glutamate secretion through interaction with BEST1. Reduces keratinocyte intercellular adhesion, via interacting with PKP1 and sequestering it in the cytoplasm, thereby reducing its incorporation into desmosomes. Plays a role in mitochondrial protein catabolic process (also named MALM) that promotes the degradation of damaged proteins inside mitochondria. In Homo sapiens (Human), this protein is 14-3-3 protein gamma.